A 382-amino-acid polypeptide reads, in one-letter code: Na(+)/H(+) antiporter NhaA 2 (382 aa).

The next 11 membrane-spanning stretches (helical) occupy residues 7 to 27 (MVLS…LALL), 58 to 78 (LDLW…GLEL), 94 to 114 (SLPI…FAAI), 124 to 144 (GWAI…MLLG), 153 to 173 (LFLL…IALF), 178 to 198 (LSAL…LLNY), 199 to 219 (YHIT…IAML), 255 to 275 (NPWV…GIDI), 291 to 311 (IILG…FIAI), 327 to 347 (FYGI…IDGL), and 361 to 381 (LAIL…LKIV).

It belongs to the NhaA Na(+)/H(+) (TC 2.A.33) antiporter family.

The protein resides in the cell inner membrane. The enzyme catalyses Na(+)(in) + 2 H(+)(out) = Na(+)(out) + 2 H(+)(in). Na(+)/H(+) antiporter that extrudes sodium in exchange for external protons. The polypeptide is Na(+)/H(+) antiporter NhaA 2 (Campylobacter jejuni subsp. jejuni serotype O:6 (strain 81116 / NCTC 11828)).